The following is a 170-amino-acid chain: Peptide deformylase (170 aa).

Fe cation is bound by residues Cys-94 and His-136. Residue Glu-137 is part of the active site. His-140 contacts Fe cation.

This sequence belongs to the polypeptide deformylase family. It depends on Fe(2+) as a cofactor.

It catalyses the reaction N-terminal N-formyl-L-methionyl-[peptide] + H2O = N-terminal L-methionyl-[peptide] + formate. Its function is as follows. Removes the formyl group from the N-terminal Met of newly synthesized proteins. Requires at least a dipeptide for an efficient rate of reaction. N-terminal L-methionine is a prerequisite for activity but the enzyme has broad specificity at other positions. The sequence is that of Peptide deformylase from Agrobacterium fabrum (strain C58 / ATCC 33970) (Agrobacterium tumefaciens (strain C58)).